The sequence spans 185 residues: Ribosome-recycling factor (185 aa).

The protein belongs to the RRF family.

Its subcellular location is the cytoplasm. Responsible for the release of ribosomes from messenger RNA at the termination of protein biosynthesis. May increase the efficiency of translation by recycling ribosomes from one round of translation to another. This is Ribosome-recycling factor from Bacillus anthracis (strain CDC 684 / NRRL 3495).